The primary structure comprises 205 residues: MSATPRPHDLVWLNHASALEDIAEPWVAQQWRAALPVVVRRDVDDQARVPVGVRGMKREQRAAGWVQARNIVRSVTPEMLVDREVLLHSPFVSQPPVQGAIALTLHRWPWGWGVTGSTGYALATEIPVLHAASDLDLLIRASQPLDREALLEWQTRVAQLPCRADTQVETPYGAFALNEWLRDGRALLKTSRGARLTATPWHREE.

Catalysis depends on residues D134 and D136.

The protein belongs to the MdcG family.

It catalyses the reaction apo-[malonate decarboxylase ACP] + 2'-(5''-triphospho-alpha-D-ribosyl)-3'-dephospho-CoA = holo-[malonate decarboxylase ACP] + diphosphate. Transfers 2'-(5-triphosphoribosyl)-3'-dephosphocoenzyme-A to the apo-[acyl-carrier-protein] of the malonate decarboxylase to yield holo-[acyl-carrier-protein]. The polypeptide is Phosphoribosyl-dephospho-CoA transferase (Klebsiella pneumoniae subsp. pneumoniae (strain ATCC 700721 / MGH 78578)).